Here is a 150-residue protein sequence, read N- to C-terminus: Large ribosomal subunit protein bL9 (150 aa).

The protein belongs to the bacterial ribosomal protein bL9 family.

Its function is as follows. Binds to the 23S rRNA. This is Large ribosomal subunit protein bL9 from Neisseria meningitidis serogroup C (strain 053442).